A 361-amino-acid polypeptide reads, in one-letter code: Mitochondrial import receptor subunit TOM40 homolog (361 aa).

Over residues 1–10 (MGNVLAASSP) the composition is skewed to low complexity. Residues 1 to 71 (MGNVLAASSP…TASASGAAED (71 aa)) are disordered. The segment covering 11-36 (PAGPPPPPAPALVGLPPPPPSPPGFT) has biased composition (pro residues). Composition is skewed to low complexity over residues 37 to 52 (LPPL…STSR) and 59 to 71 (GAAT…AAED).

Belongs to the Tom40 family. As to quaternary structure, forms part of the preprotein translocase complex of the outer mitochondrial membrane (TOM complex) which consists of at least 7 different proteins (TOMM5, TOMM6, TOMM7, TOMM20, TOMM22, TOMM40 and TOMM70). Interacts with mitochondrial targeting sequences. Interacts with TIMM29; linking the TIM22 complex to the TOM complex. Forms a complex with BCAP31 (via C-terminus) which mediates the translocation of components of the mitochondrial membrane respiratory chain NADH dehydrogenase (Complex I) from the cytosol to the mitochondria. Interacts (via N-terminus) with CYP1A1 (via mitochondrial targeting signal); this interaction is required for CYP1A1 translocation across the mitochondrial outer membrane.

The protein resides in the mitochondrion outer membrane. Channel-forming protein essential for import of protein precursors into mitochondria. Plays a role in the assembly of the mitochondrial membrane respiratory chain NADH dehydrogenase (Complex I) by forming a complex with BCAP31 and mediating the translocation of Complex I components from the cytosol to the mitochondria. This is Mitochondrial import receptor subunit TOM40 homolog (TOMM40) from Homo sapiens (Human).